The primary structure comprises 636 residues: MYNKRIKRVLPPEEMVTDSKQESGGQKNGDKTGFDATDLKPYLLKDPETMAMNFARALENLGQAASAWLAPRERGEITETAIDPMTDMVKTLSKISEYWISDPRRTFEAQTQLMSSFFGIWMRSMQRMQGTRGMQGEPLPPEPDTRKDKRFSDEDWQKNPFFDFLRQVYFVTSDWVDKLVSETDGLDEHTKHKAGFYVKQITAALSPSNFIATNPQLYRETIASNGENLVRGMKMLAEDIAAGKGELRLRQTDMTKFAVGRDMALTPGKVIAQNDICQIIQYEASTETVLKRPLLICPPWINKFYILDLNPQKSFIKWCVDQGQTVFVISWVNPDGRHAEKDWAAYAREGIDFALETIEKATGEKEVNAVGYCVGGTLLAATLALHAKEKNKRIKTATLFTTQVDFTHAGDLKVFVDEEQLAALEEHMQAAGYLDGSKMSMAFNMLRASELIWPYFVNSYLKGQEPLPFDLLFWNADSTRMAAANHAFYLRNCYLRNALTQNEMILDGKRISLKDVKIPIYNLATREDHIAPAKSVFLGSRFFGGKVEFVVTGSGHIAGVVNPPDKRKYQFWTGGPAKGEYETWLEQASETPGSWWPHWQAWIETHDGRRVAARKPGGDALNAIEEAPGSYVMERT.

2 disordered regions span residues 1 to 38 (MYNKRIKRVLPPEEMVTDSKQESGGQKNGDKTGFDATD) and 129 to 152 (QGTRGMQGEPLPPEPDTRKDKRFS). Positions 143–152 (PDTRKDKRFS) are enriched in basic and acidic residues. Cys-373 is an active-site residue.

Belongs to the PHA/PHB synthase family. Type I PhaC subfamily.

The protein localises to the cytoplasm. It catalyses the reaction (3R)-3-hydroxybutanoyl-CoA + [(3R)-hydroxybutanoate](n) = [(3R)-hydroxybutanoate](n+1) + CoA. It functions in the pathway biopolymer metabolism; poly-(R)-3-hydroxybutanoate biosynthesis. In terms of biological role, polymerizes D(-)-3-hydroxybutyryl-CoA to create PHB which consists of thousands of hydroxybutyrate molecules linked end to end. PHB serves as an intracellular energy reserve material when cells grow under conditions of nutrient limitation. The sequence is that of Poly(3-hydroxyalkanoate) polymerase subunit PhaC from Rhizobium etli (strain ATCC 51251 / DSM 11541 / JCM 21823 / NBRC 15573 / CFN 42).